Reading from the N-terminus, the 247-residue chain is Uridylate kinase (247 aa).

Position 18-21 (18-21 (KLSG)) interacts with ATP. Gly-60 contacts UMP. 2 residues coordinate ATP: Gly-61 and Arg-65. Residues Asp-80 and 141–148 (TGNPFFTT) contribute to the UMP site. ATP-binding residues include Thr-168, Tyr-174, and Asp-177.

It belongs to the UMP kinase family. As to quaternary structure, homohexamer.

It is found in the cytoplasm. The catalysed reaction is UMP + ATP = UDP + ADP. The protein operates within pyrimidine metabolism; CTP biosynthesis via de novo pathway; UDP from UMP (UMPK route): step 1/1. Inhibited by UTP. Functionally, catalyzes the reversible phosphorylation of UMP to UDP. The protein is Uridylate kinase of Pseudomonas fluorescens (strain ATCC BAA-477 / NRRL B-23932 / Pf-5).